A 419-amino-acid polypeptide reads, in one-letter code: Effector protein BipC (419 aa).

Disordered stretches follow at residues 62 to 94 (VAGS…GLER) and 338 to 402 (LQSG…AKSQ). Composition is skewed to basic and acidic residues over residues 71–94 (ELAR…GLER) and 380–392 (TRDE…REAA).

This sequence belongs to the SctB/SipC family.

It localises to the secreted. This is Effector protein BipC (bipC) from Burkholderia pseudomallei (strain 1710b).